Here is a 463-residue protein sequence, read N- to C-terminus: Hexose-6-phosphate:phosphate antiporter (463 aa).

The Cytoplasmic segment spans residues methionine 1–tryptophan 24. The chain crosses the membrane as a helical span at residues phenylalanine 25–isoleucine 45. At arginine 46–tyrosine 60 the chain is on the periplasmic side. Residues glycine 61 to glycine 81 traverse the membrane as a helical segment. At lysine 82 to glutamine 96 the chain is on the cytoplasmic side. Residues phenylalanine 97–glycine 117 form a helical membrane-spanning segment. Residues serine 118–serine 120 lie on the Periplasmic side of the membrane. Residues valine 121 to glycine 141 form a helical membrane-spanning segment. Residues serine 142–threonine 159 are Cytoplasmic-facing. The chain crosses the membrane as a helical span at residues phenylalanine 160–leucine 180. At phenylalanine 181–glycine 189 the chain is on the periplasmic side. A helical membrane pass occupies residues histidine 190 to leucine 210. At arginine 211–lysine 259 the chain is on the cytoplasmic side. A helical transmembrane segment spans residues valine 260–glutamine 280. At tryptophan 281 to alanine 297 the chain is on the periplasmic side. A helical transmembrane segment spans residues isoleucine 298–leucine 318. Over serine 319–arginine 326 the chain is Cytoplasmic. A helical transmembrane segment spans residues glycine 327–alanine 347. Residues serine 348–leucine 357 are Periplasmic-facing. Residues phenylalanine 358–phenylalanine 378 form a helical membrane-spanning segment. The Cytoplasmic segment spans residues valine 379–lysine 382. Residues alanine 383–alanine 403 traverse the membrane as a helical segment. At lysine 404–threonine 425 the chain is on the periplasmic side. The chain crosses the membrane as a helical span at residues phenylalanine 426 to methionine 446. The Cytoplasmic portion of the chain corresponds to glutamate 447–alanine 463.

It belongs to the major facilitator superfamily. Organophosphate:Pi antiporter (OPA) (TC 2.A.1.4) family.

The protein localises to the cell inner membrane. In terms of biological role, mediates the exchange of external hexose 6-phosphate and internal inorganic phosphate. The protein is Hexose-6-phosphate:phosphate antiporter (uhpT) of Escherichia coli O157:H7.